Reading from the N-terminus, the 214-residue chain is High frequency lysogenization protein HflD homolog (214 aa).

The protein belongs to the HflD family.

It localises to the cytoplasm. It is found in the cell inner membrane. This chain is High frequency lysogenization protein HflD homolog, found in Chromohalobacter salexigens (strain ATCC BAA-138 / DSM 3043 / CIP 106854 / NCIMB 13768 / 1H11).